Here is a 163-residue protein sequence, read N- to C-terminus: Methyl-CpG-binding domain-containing protein 3 (163 aa).

A CW-type zinc finger spans residues 6 to 56 (TTLIDSYAAQCWKCLKVRSIESQEDYEEIRSKTLEKFFECKRCEEPGDMVM). An MBD domain is found at 65–137 (WFQDEHSIPK…EEVSFAAPKR (73 aa)). The segment at 140-163 (LKKKPVDSHSSSRNTEEDGVSRDA) is disordered. The segment covering 153–163 (NTEEDGVSRDA) has biased composition (basic and acidic residues).

It localises to the nucleus. Probable transcriptional regulator. This chain is Methyl-CpG-binding domain-containing protein 3 (MBD3), found in Arabidopsis thaliana (Mouse-ear cress).